Reading from the N-terminus, the 279-residue chain is 3-methyl-2-oxobutanoate hydroxymethyltransferase 2 (279 aa).

Residues aspartate 58 and aspartate 97 each contribute to the Mg(2+) site. Residues 58–59 (DS), aspartate 97, and lysine 126 contribute to the 3-methyl-2-oxobutanoate site. Glutamate 128 contributes to the Mg(2+) binding site. Catalysis depends on glutamate 195, which acts as the Proton acceptor.

This sequence belongs to the PanB family. Homodecamer; pentamer of dimers. Mg(2+) serves as cofactor.

The protein resides in the cytoplasm. It carries out the reaction 3-methyl-2-oxobutanoate + (6R)-5,10-methylene-5,6,7,8-tetrahydrofolate + H2O = 2-dehydropantoate + (6S)-5,6,7,8-tetrahydrofolate. It functions in the pathway cofactor biosynthesis; (R)-pantothenate biosynthesis; (R)-pantoate from 3-methyl-2-oxobutanoate: step 1/2. Its function is as follows. Catalyzes the reversible reaction in which hydroxymethyl group from 5,10-methylenetetrahydrofolate is transferred onto alpha-ketoisovalerate to form ketopantoate. This is 3-methyl-2-oxobutanoate hydroxymethyltransferase 2 from Methylibium petroleiphilum (strain ATCC BAA-1232 / LMG 22953 / PM1).